The following is a 657-amino-acid chain: Hemocyanin A chain (657 aa).

Cys-93 and Cys-98 form a disulfide bridge. A glycan (N-linked (GlcNAc...) asparagine) is linked at Asn-167. Residues His-194, His-198, His-224, His-344, His-348, and His-384 each contribute to the Cu cation site. 2 disulfides stabilise this stretch: Cys-483/Cys-502 and Cys-562/Cys-609. Residues 594–616 are disordered; that stretch reads EGHNGGHDYGGTHAQCGVHGEAY.

It belongs to the tyrosinase family. Hemocyanin subfamily. Hexamer of a number of different chains, of which A, B, and C have been identified. Hemolymph.

The protein localises to the secreted. Its subcellular location is the extracellular space. In terms of biological role, hemocyanins are copper-containing oxygen carriers occurring freely dissolved in the hemolymph of many mollusks and arthropods. This is Hemocyanin A chain from Panulirus interruptus (California spiny lobster).